Consider the following 1619-residue polypeptide: Rap-GAP domain-containing protein DDB_G0281809 (1619 aa).

Disordered stretches follow at residues 128–249 (SMSN…TTPI), 289–316 (QQQQQQSPSITTGTVKGSKYRESVMPGS), 907–974 (SIGG…PYIN), and 1134–1153 (ISNNNTTTTSNNSIKSTSNN). Composition is skewed to low complexity over residues 130-204 (SNNN…SLSL) and 231-249 (QISATTTAATSPTTPTTPI). Residues 265 to 295 (FNEVVQQQQQQQQQQQQQQQQQQQQQQQQQS) are a coiled coil. 2 stretches are compositionally biased toward low complexity: residues 916–926 (SGNSSQPSSTG) and 934–965 (SGSKSNSSSSSSSQPSSTGGSGNNSNSANGGS). The Rap-GAP domain maps to 1273-1494 (LNMLDSVSER…TNRKKLISDI (222 aa)). The segment at 1554–1619 (IGTFTLPPPP…LSQSEDQSHK (66 aa)) is disordered. Over residues 1559-1573 (LPPPPISPTISPQPS) the composition is skewed to pro residues. The span at 1574–1590 (PHLSSSGGSWASSKGGS) shows a compositional bias: low complexity. Residues 1591–1619 (TQPTTPSGRTSNFLSRRPNLSQSEDQSHK) show a composition bias toward polar residues.

The chain is Rap-GAP domain-containing protein DDB_G0281809 from Dictyostelium discoideum (Social amoeba).